Here is a 179-residue protein sequence, read N- to C-terminus: Large ribosomal subunit protein uL6 (179 aa).

It belongs to the universal ribosomal protein uL6 family. As to quaternary structure, part of the 50S ribosomal subunit.

In terms of biological role, this protein binds to the 23S rRNA, and is important in its secondary structure. It is located near the subunit interface in the base of the L7/L12 stalk, and near the tRNA binding site of the peptidyltransferase center. The sequence is that of Large ribosomal subunit protein uL6 from Synechocystis sp. (strain ATCC 27184 / PCC 6803 / Kazusa).